The primary structure comprises 167 residues: MTTRSQDQTRDLKVLGTGRLTSPEGGPSVALLEAFPNCFPQRPYVISISFPEFTSLCPVTGQPDCGTITVEYIPDELCVESKSFKLYMFAFRNHQSFMETITNNVLEDLRALLNPCWCRVKGLFAPRGGTRIHVFAEAFKDGMPEEQSALVRETVRSWKSEPDPHRP.

The interval 1-24 is disordered; that stretch reads MTTRSQDQTRDLKVLGTGRLTSPE. Residue cysteine 57 is the Thioimide intermediate of the active site. The active-site Proton donor is aspartate 64. Residues 79–81 and 98–99 contribute to the substrate site; these read VES and ME.

This sequence belongs to the GTP cyclohydrolase I family. QueF type 1 subfamily.

It is found in the cytoplasm. The catalysed reaction is 7-aminomethyl-7-carbaguanine + 2 NADP(+) = 7-cyano-7-deazaguanine + 2 NADPH + 3 H(+). Its pathway is tRNA modification; tRNA-queuosine biosynthesis. In terms of biological role, catalyzes the NADPH-dependent reduction of 7-cyano-7-deazaguanine (preQ0) to 7-aminomethyl-7-deazaguanine (preQ1). In Desulfovibrio desulfuricans (strain ATCC 27774 / DSM 6949 / MB), this protein is NADPH-dependent 7-cyano-7-deazaguanine reductase.